The primary structure comprises 76 residues: Exodeoxyribonuclease 7 small subunit (76 aa).

It belongs to the XseB family. As to quaternary structure, heterooligomer composed of large and small subunits.

Its subcellular location is the cytoplasm. It catalyses the reaction Exonucleolytic cleavage in either 5'- to 3'- or 3'- to 5'-direction to yield nucleoside 5'-phosphates.. Its function is as follows. Bidirectionally degrades single-stranded DNA into large acid-insoluble oligonucleotides, which are then degraded further into small acid-soluble oligonucleotides. This chain is Exodeoxyribonuclease 7 small subunit, found in Bacillus cereus (strain G9842).